The primary structure comprises 159 residues: Lipoprotein signal peptidase (159 aa).

2 helical membrane-spanning segments follow: residues 59–79 and 87–107; these read PMIL…YVVF and FLIT…DRIL. Catalysis depends on residues aspartate 113 and aspartate 139. The chain crosses the membrane as a helical span at residues 131–151; that stretch reads LWPVFNIADSAITIGACVLVI.

The protein belongs to the peptidase A8 family.

It is found in the cell inner membrane. The enzyme catalyses Release of signal peptides from bacterial membrane prolipoproteins. Hydrolyzes -Xaa-Yaa-Zaa-|-(S,diacylglyceryl)Cys-, in which Xaa is hydrophobic (preferably Leu), and Yaa (Ala or Ser) and Zaa (Gly or Ala) have small, neutral side chains.. Its pathway is protein modification; lipoprotein biosynthesis (signal peptide cleavage). Functionally, this protein specifically catalyzes the removal of signal peptides from prolipoproteins. The protein is Lipoprotein signal peptidase of Chlorobium phaeobacteroides (strain BS1).